A 1006-amino-acid chain; its full sequence is MTVTSSAAIDIGGGGGGRRSDRLDSDRTSEDMSFIASPANESFQIGASFVDVQNESSGSIDTATATLHELNYTFGMPPVTEESENMPQNYETVVELLPGEERAPINKLTEFPIEGGSLFVTNFRIVVILKDKEVEEALRFLVFPLQDIEQIDLAIPAFIHLSLKIGRMFTICFKTAEDAALVHKILYTAFQRLNRPISSIYTSRPQDWTSKNTDNPMQSLNAFAWKFSEAVDELDRDGKLPSWLLRADSVAQEITHIDFNRLGMSEHFQISSVNENFEVCPTYPEKIIVPKGITDDDIRKGAPYRSIGRFPAVIWRCRKTRAVLMRSSQPQVGILSWRNPTDEKIIEEAVKASRIEGEEKKQFIIMDARGYTSAFANRARSGGFENTEYYQQAKLEFLGLPNIHAVRGSFNNVRTMLHNLGPNEQLLTSLQTTGWLLNLSNLLVNAANCADHLSKGHSVLVHCSDGWDRTTQVTTLAKIMLDEYYRTVKGFEELIRRDWIAFGHKLYDRQLVAFGNWGTSDERSPVFLQFLEAVRHLQREQPTLFQFTHAYLIKLAKHAYSGLFGSFLFNSHKERREAMEKCKGTLVDIWRFIGPHNEEYVNQSFDEHYTGAVKPVNVSVINLRVWHEVFADEEEHYTQIFSPKEERPLSGCTTPMNTSTSTNLVKSKSSESINSLNVDGSAKESSQQHPTCSTTPSDNTNSLPMSTSFIQQSLYQPKVRGVAAIDRDGVIRFEDDEQAMLRKKNKLRAEEIRRKDEKIEELRRRAVLDTNKVSPGQRQSYSESDVETTGTLERVMSDVSMVDPVNELPHFKPNTTWEGESGHCAYCKKEFNKLSVYVEDRQHHCRNCGRVVCEDCSKNRFSVIEEGKSVQKRACDSCYDSMHETDLKLSSSSTTTTSSSTKIENDSNVPGLDNNSDNVSENVSENAIPDIIVEEKEAEDPIKEAESPSKETKCPKTLRNFISFSPKSSMRKNKVHSRDPLKSIDEGSSSQQAESDDVLDVNEQPL.

Over residues 1 to 10 (MTVTSSAAID) the composition is skewed to low complexity. The disordered stretch occupies residues 1–29 (MTVTSSAAIDIGGGGGGRRSDRLDSDRTS). The segment covering 18–29 (RRSDRLDSDRTS) has biased composition (basic and acidic residues). A Myotubularin phosphatase domain is found at 224-630 (AWKFSEAVDE…INLRVWHEVF (407 aa)). Residues Asn-377, Asn-402, and Ile-403 each contribute to the a 1,2-diacyl-sn-glycero-3-phospho-(1D-myo-inositol-3,5-bisphosphate) site. A 1,2-diacyl-sn-glycero-3-phospho-(1D-myo-inositol-3-phosphate) contacts are provided by Asn-377, Asn-402, and Ile-403. The active-site Phosphocysteine intermediate is the Cys-463. Residues Ser-464, Asp-465, Gly-466, Trp-467, Asp-468, Arg-469, Lys-505, and Arg-509 each coordinate a 1,2-diacyl-sn-glycero-3-phospho-(1D-myo-inositol-3,5-bisphosphate). The a 1,2-diacyl-sn-glycero-3-phospho-(1D-myo-inositol-3-phosphate) site is built by Ser-464, Asp-465, Gly-466, Trp-467, Asp-468, and Arg-469. Arg-509 is a binding site for a 1,2-diacyl-sn-glycero-3-phospho-(1D-myo-inositol-3-phosphate). The segment at 641-705 (FSPKEERPLS…PSDNTNSLPM (65 aa)) is disordered. Over residues 651–705 (GCTTPMNTSTSTNLVKSKSSESINSLNVDGSAKESSQQHPTCSTTPSDNTNSLPM) the composition is skewed to polar residues. The segment at 818–883 (EGESGHCAYC…ACDSCYDSMH (66 aa)) adopts an FYVE-type zinc-finger fold. The Zn(2+) site is built by Cys-824, Cys-827, Cys-845, Cys-848, Cys-853, Cys-856, Cys-875, and Cys-878. The tract at residues 886–1006 (DLKLSSSSTT…DVLDVNEQPL (121 aa)) is disordered. Low complexity-rich tracts occupy residues 890–901 (SSSSTTTTSSST) and 913–926 (DNNS…VSEN). Basic and acidic residues-rich tracts occupy residues 933–954 (VEEK…ETKC) and 976–985 (HSRDPLKSID).

This sequence belongs to the protein-tyrosine phosphatase family. Non-receptor class myotubularin subfamily. As to expression, expressed in the body wall muscle and in eggs. Expressed in head neurons. Expressed in the intestine. Expressed in pharyngeal cells, vulval muscle cells and cells of the tail region.

The protein localises to the cytoplasm. It is found in the membrane. It catalyses the reaction a 1,2-diacyl-sn-glycero-3-phospho-(1D-myo-inositol-3,5-bisphosphate) + H2O = a 1,2-diacyl-sn-glycero-3-phospho-(1D-myo-inositol-5-phosphate) + phosphate. The enzyme catalyses a 1,2-diacyl-sn-glycero-3-phospho-(1D-myo-inositol-3-phosphate) + H2O = a 1,2-diacyl-sn-glycero-3-phospho-(1D-myo-inositol) + phosphate. It carries out the reaction 1,2-dihexadecanoyl-sn-glycero-3-phospho-(1D-myo-inositol-3-phosphate) + H2O = 1,2-dihexadecanoyl-sn-glycero-3-phospho-(1D-myo-inositol) + phosphate. The catalysed reaction is 1,2-dihexadecanoyl-sn-glycero-3-phospho-(1D-myo-inositol-3,5-phosphate) + H2O = 1,2-dihexadecanoyl-sn-glycero-3-phospho-(1D-myo-inositol-5-phosphate) + phosphate. It catalyses the reaction 1,2-dioctanoyl-sn-glycero-3-phospho-(1-D-myo-inositol-3-phosphate) + H2O = 1,2-dioctanoyl-sn-glycero-3-phospho-(1D-myo-inositol) + phosphate. Its activity is regulated as follows. Inhibited by sodium vanadate and peroxide. Preferentially dephosphorylates phosphatidylinositol 3-phosphate (PI3P), and has some activity towards phosphatidylinositol 3,5-bisphosphate (PI35P). Positively regulates autophagy and is recruited to autophagosomes by PI3P where it catalyzes PI3P turnover to promote autophagosome maturation. Thought to have a role in maintenance of muscle function. Involved in locomotion and lifespan determination. The polypeptide is Phosphatidylinositol-3,5-bisphosphate 3-phosphatase MTMR3 (Caenorhabditis elegans).